Here is a 440-residue protein sequence, read N- to C-terminus: Origin recognition complex subunit 4 (440 aa).

Residue 64–71 (GPKGSGKS) participates in ATP binding.

Belongs to the ORC4 family. In terms of assembly, ORC is composed of six subunits.

The protein resides in the nucleus. In terms of biological role, component of the origin recognition complex (ORC) that binds origins of replication. DNA-binding is ATP-dependent, however specific DNA sequences that define origins of replication have not been identified so far. ORC is required to assemble the pre-replication complex necessary to initiate DNA replication. In Dictyostelium discoideum (Social amoeba), this protein is Origin recognition complex subunit 4 (orcD).